Reading from the N-terminus, the 502-residue chain is Peroxisomal catalase (502 aa).

Catalysis depends on residues H64 and N137. Y347 provides a ligand contact to heme. Positions A500 to M502 match the Microbody targeting signal motif.

It belongs to the catalase family. Heme is required as a cofactor.

The protein localises to the peroxisome matrix. The catalysed reaction is 2 H2O2 = O2 + 2 H2O. Catalyzes the degradation of hydrogen peroxide (H(2)O(2)) generated by peroxisomal oxidases to water and oxygen, thereby protecting cells from the toxic effects of hydrogen peroxide. This Toxoplasma gondii protein is Peroxisomal catalase.